The sequence spans 118 residues: UPF0382 membrane protein C1782.12c (118 aa).

Positions 1–18 are cleaved as a signal peptide; the sequence is MTIWNVAALTGLLSVGLG. Over 19 to 40 the chain is Lumenal; it reads AYGSHGLQKRVQDPHLLKSWST. A helical transmembrane segment spans residues 41–61; sequence ACTYLMFHSLATMAVSLHPVY. The Cytoplasmic segment spans residues 62 to 67; sequence GKSRWT. A helical membrane pass occupies residues 68 to 88; that stretch reads GPLLITGSCLFSGTIYGLCLL. Residues 89-96 are Lumenal-facing; it reads PKGHSLRR. The chain crosses the membrane as a helical span at residues 97 to 117; sequence ILGPLTPIGGLVMLTGWATML. Position 118 (Val118) is a topological domain, cytoplasmic.

It belongs to the UPF0382 family.

It is found in the endoplasmic reticulum membrane. This Schizosaccharomyces pombe (strain 972 / ATCC 24843) (Fission yeast) protein is UPF0382 membrane protein C1782.12c.